The following is a 346-amino-acid chain: MDQYCILGRIGEGAHGIVFKAKHVETGEIVALKKVALRRLEDGIPNQALREIKALQEMEDNQYVVQLKAVFPHSAGFVLAFEFMLSDLAEVVRHAQRPLAQAQVKSYLQMLLKGVSFCHANNIVHRDLKPANLLISASGQLKIADFGLARVFSPDGSRLYTHQVATRWYRAPELLYGARQYDQGVDLWAVGCIMGELLNGSPLFPGKNDIEQLCYVLRILGTPNPQVWPELTELPDYNKISFKEQAPVPLEEVLPDASPQALDLLGQFLLYPPRQRIAASKALLHQYFFTAPLPAHPSELPIPQRLGVPAPKAHPGPPRIHDFYVDRPLEESLLNPELIRPFILEG.

One can recognise a Protein kinase domain in the interval 4-288 (YCILGRIGEG…ASKALLHQYF (285 aa)). Residues 10–18 (IGEGAHGIV) and Lys-33 each bind ATP. The active-site Proton acceptor is the Asp-127.

This sequence belongs to the protein kinase superfamily. CMGC Ser/Thr protein kinase family. CDC2/CDKX subfamily. As to quaternary structure, monomer. Interacts with TBC1D32 and MAK.

It localises to the nucleus. It is found in the cytoplasm. Its subcellular location is the cell projection. The protein resides in the cilium. It catalyses the reaction L-seryl-[protein] + ATP = O-phospho-L-seryl-[protein] + ADP + H(+). It carries out the reaction L-threonyl-[protein] + ATP = O-phospho-L-threonyl-[protein] + ADP + H(+). Required for high-level Shh responses in the developing neural tube. Together with TBC1D32, controls the structure of the primary cilium by coordinating assembly of the ciliary membrane and axoneme, allowing GLI2 to be properly activated in response to SHH signaling. Involved in cell growth. Activates CDK2, a kinase involved in the control of the cell cycle, by phosphorylating residue 'Thr-160'. This chain is Cyclin-dependent kinase 20 (CDK20), found in Pongo abelii (Sumatran orangutan).